A 484-amino-acid chain; its full sequence is Acetyl-coenzyme A carboxylase carboxyl transferase subunit beta, chloroplastic (484 aa).

In terms of domain architecture, CoA carboxyltransferase N-terminal spans 223-484; sequence LWIQCDNCYG…LHAFFPLNKN (262 aa). Zn(2+)-binding residues include Cys-227, Cys-230, Cys-243, and Cys-246. A C4-type zinc finger spans residues 227–246; sequence CDNCYGLMYKKVKMNVCEQC.

It belongs to the AccD/PCCB family. As to quaternary structure, acetyl-CoA carboxylase is a heterohexamer composed of biotin carboxyl carrier protein, biotin carboxylase and 2 subunits each of ACCase subunit alpha and ACCase plastid-coded subunit beta (accD). Zn(2+) serves as cofactor.

The protein localises to the plastid. Its subcellular location is the chloroplast stroma. The catalysed reaction is N(6)-carboxybiotinyl-L-lysyl-[protein] + acetyl-CoA = N(6)-biotinyl-L-lysyl-[protein] + malonyl-CoA. Its pathway is lipid metabolism; malonyl-CoA biosynthesis; malonyl-CoA from acetyl-CoA: step 1/1. In terms of biological role, component of the acetyl coenzyme A carboxylase (ACC) complex. Biotin carboxylase (BC) catalyzes the carboxylation of biotin on its carrier protein (BCCP) and then the CO(2) group is transferred by the transcarboxylase to acetyl-CoA to form malonyl-CoA. In Crucihimalaya wallichii (Rock-cress), this protein is Acetyl-coenzyme A carboxylase carboxyl transferase subunit beta, chloroplastic.